The chain runs to 311 residues: Uridine phosphorylase 1 (311 aa).

Phosphate contacts are provided by residues glycine 61, arginine 95, and 139-142; that span reads RIGT. Residues 143–144 and 218–220 contribute to the uridine site; these read SG and QGR.

This sequence belongs to the PNP/UDP phosphorylase family. As to quaternary structure, homodimer. The N-terminus is blocked.

The enzyme catalyses uridine + phosphate = alpha-D-ribose 1-phosphate + uracil. It catalyses the reaction 2'-deoxyuridine + phosphate = 2-deoxy-alpha-D-ribose 1-phosphate + uracil. It participates in pyrimidine metabolism; UMP biosynthesis via salvage pathway; uracil from uridine (phosphorylase route): step 1/1. Strongly inhibited by 2,2'-anhydro-5-ethyluridine, a competitive inhibitor. Functionally, catalyzes the reversible phosphorylytic cleavage of uridine to uracil and ribose-1-phosphate which can then be utilized as carbon and energy sources or in the rescue of pyrimidine bases for nucleotide synthesis. Shows broad substrate specificity and can also accept deoxyuridine and other analogous compounds. The chain is Uridine phosphorylase 1 from Mus musculus (Mouse).